We begin with the raw amino-acid sequence, 346 residues long: Olfactory receptor 8G5 (346 aa).

Topologically, residues 1 to 60 (MIIYKQGITFLQKENNNTIHLNTMFFLSPAETHQRMAAENHSFVTKFILVGLTEKSELQL) are extracellular. Residues Asn-16 and Asn-40 are each glycosylated (N-linked (GlcNAc...) asparagine). The helical transmembrane segment at 61–81 (PLFLVFLGIYVVTVLGNLGMI) threads the bilayer. The Cytoplasmic portion of the chain corresponds to 82 to 89 (TLIGLSSH). A helical transmembrane segment spans residues 90 to 110 (LHTPMYCFLSSLSFIDFCHST). Residues 111–134 (VITPKMLVNFVTEKNIISYPECMT) are Extracellular-facing. An intrachain disulfide couples Cys-132 to Cys-214. Residues 135–155 (QLYFFLVFAIAECHMLAAMAY) form a helical membrane-spanning segment. The Cytoplasmic portion of the chain corresponds to 156-174 (DGYVAICSPLLYSIIISNK). A helical membrane pass occupies residues 175–195 (ACFSLILVVYVIGLICASAHI). Residues 196 to 232 (GCMFRVQFCKFDVINHYFCDLISILKLSCSSTYINEL) are Extracellular-facing. The helical transmembrane segment at 233–252 (LILIFSGINILVPSLTILSS) threads the bilayer. Residues 253-272 (YIFIIASILRIRYTEGRSKA) lie on the Cytoplasmic side of the membrane. Residues 273-293 (FSTCSSHISAVSVFFGSAAFM) form a helical membrane-spanning segment. Topologically, residues 294 to 306 (YLQPSSVSSMDQG) are extracellular. Residues 307-327 (KVSSVFYTIVVPMLNPLIYSL) traverse the membrane as a helical segment. Residues 328–346 (RNKDVHVALKKTLGKRTFL) lie on the Cytoplasmic side of the membrane.

Belongs to the G-protein coupled receptor 1 family.

The protein localises to the cell membrane. In terms of biological role, odorant receptor. This is Olfactory receptor 8G5 (OR8G5) from Homo sapiens (Human).